The primary structure comprises 417 residues: Inhibitor of growth protein 3 (417 aa).

Disordered stretches follow at residues 128–203 (TPSQ…YNTN) and 286–320 (QTLS…SSSS). Over residues 136–152 (HHAHSHTPVEKRKHNPS) the composition is skewed to basic residues. The span at 156 to 168 (GATDHVPEKKFKS) shows a compositional bias: basic and acidic residues. 3 stretches are compositionally biased toward low complexity: residues 189-203 (NNNS…YNTN), 286-295 (QTLSSSSTDS), and 307-320 (SSSQ…SSSS). The PHD-type zinc-finger motif lies at 359–408 (PRYCICNQVSYGEMVGCDNQDCPIEWFHYGCVGLTEAPKGKWYCPQCTAA). Zn(2+) contacts are provided by Cys362, Cys364, Cys375, Cys380, His386, Cys389, Cys402, and Cys405.

The protein belongs to the ING family. As to quaternary structure, interacts with H3K4me3 and to a lesser extent with H3K4me2. Component of the NuA4 histone acetyltransferase complex.

It is found in the nucleus. In terms of biological role, component of the NuA4 histone acetyltransferase (HAT) complex which is involved in transcriptional activation of select genes principally by acetylation of nucleosomal histone H4 and H2A. This modification may both alter nucleosome - DNA interactions and promote interaction of the modified histones with other proteins which positively regulate transcription. NuA4 may also play a direct role in DNA repair when directly recruited to sites of DNA damage. The sequence is that of Inhibitor of growth protein 3 (ING3) from Gallus gallus (Chicken).